Reading from the N-terminus, the 77-residue chain is Liver-expressed antimicrobial peptide 2 (77 aa).

The N-terminal stretch at 1 to 22 (MWHLKLFAVLVICLLLAVQVHG) is a signal peptide. Residues 23 to 37 (SPIPELSSAKRRPRR) constitute a propeptide that is removed on maturation. Intrachain disulfides connect Cys54-Cys65 and Cys60-Cys70.

Belongs to the LEAP2 family.

The protein localises to the secreted. In terms of biological role, has an antimicrobial activity. The polypeptide is Liver-expressed antimicrobial peptide 2 (LEAP2) (Sus scrofa (Pig)).